The chain runs to 336 residues: Peroxidase 72 (336 aa).

A signal peptide spans 1–23; sequence MAKSLNILIAALSLIAFSPFCLC. 4 cysteine pairs are disulfide-bonded: Cys-42–Cys-122, Cys-75–Cys-80, Cys-128–Cys-329, and Cys-207–Cys-239. The active-site Proton acceptor is the His-73. Ca(2+)-binding residues include Asp-74, Val-77, Gly-79, Asp-81, and Ser-83. Pro-170 serves as a coordination point for substrate. Asn-173 is a glycosylation site (N-linked (GlcNAc...) asparagine). Residue His-200 coordinates heme b. Residue Thr-201 coordinates Ca(2+). The N-linked (GlcNAc...) asparagine glycan is linked to Asn-216. Ca(2+)-binding residues include Asp-252, Thr-255, and Asp-260.

It belongs to the peroxidase family. Classical plant (class III) peroxidase subfamily. Heme b is required as a cofactor. It depends on Ca(2+) as a cofactor. As to expression, slightly expressed in roots.

It localises to the secreted. The enzyme catalyses 2 a phenolic donor + H2O2 = 2 a phenolic radical donor + 2 H2O. Removal of H(2)O(2), oxidation of toxic reductants, biosynthesis and degradation of lignin, suberization, auxin catabolism, response to environmental stresses such as wounding, pathogen attack and oxidative stress. These functions might be dependent on each isozyme/isoform in each plant tissue. This Arabidopsis thaliana (Mouse-ear cress) protein is Peroxidase 72 (PER72).